The following is a 1013-amino-acid chain: NHS-like protein 3 (1013 aa).

The residue at position 17 (Lys17) is a Phosphoserine. The tract at residues Ser20 to Ile195 is disordered. Positions Gln73–Asp89 are enriched in basic and acidic residues. Polar residues-rich tracts occupy residues Thr90–Gly99 and Ser106–Ala120. Ser92 bears the Phosphoserine mark. Tyr108 bears the Phosphotyrosine mark. A phosphoserine mark is found at Ser136, Ser143, and Ser159. Thr160 is subject to Phosphothreonine. Over residues Val168–Arg178 the composition is skewed to basic and acidic residues. At Ser213 the chain carries Phosphoserine. The residue at position 318 (Arg318) is an Asymmetric dimethylarginine. Residues Ser320, Ser325, Ser328, Ser336, Ser337, Ser339, and Ser340 each carry the phosphoserine modification. Positions Arg330–Val1013 are disordered. A compositionally biased stretch (low complexity) spans Ser336–Ser361. The segment covering Glu362–Gly375 has biased composition (polar residues). Residues Ser398, Ser402, and Ser407 each carry the phosphoserine modification. Residues Thr408–Ser427 show a composition bias toward polar residues. Low complexity-rich tracts occupy residues Val484–Ser493 and Arg515–Pro530. Thr529 carries the post-translational modification Phosphothreonine. Ser543 carries the post-translational modification Phosphoserine. Low complexity predominate over residues Ser564–Ser577. Thr591 carries the post-translational modification Phosphothreonine. Over residues Pro600–Ser614 the composition is skewed to pro residues. Position 610 is a phosphoserine (Ser610). Low complexity predominate over residues Lys615–Pro633. Residues Gln635–Gln657 are compositionally biased toward polar residues. Ser667 and Ser671 each carry phosphoserine. 2 stretches are compositionally biased toward pro residues: residues Pro668–Thr683 and Pro706–Pro716. Positions Pro779–Ser795 are enriched in basic and acidic residues. Residues Gly814–Pro829 show a composition bias toward polar residues. Phosphoserine is present on residues Ser838, Ser842, and Ser848. Residues Ala859 to Pro873 are compositionally biased toward low complexity. A phosphoserine mark is found at Ser909, Ser952, and Ser959. The span at Lys942–Ser961 shows a compositional bias: pro residues. A compositionally biased stretch (polar residues) spans Arg964 to Gly975.

Functionally, able to directly activate the TNF-NFkappaB signaling pathway. This Mus musculus (Mouse) protein is NHS-like protein 3 (Nhsl3).